Reading from the N-terminus, the 406-residue chain is Arginine deiminase (406 aa).

Cys396 (amidino-cysteine intermediate) is an active-site residue.

The protein belongs to the arginine deiminase family.

Its subcellular location is the cytoplasm. The enzyme catalyses L-arginine + H2O = L-citrulline + NH4(+). It functions in the pathway amino-acid degradation; L-arginine degradation via ADI pathway; carbamoyl phosphate from L-arginine: step 1/2. The polypeptide is Arginine deiminase (Vibrio campbellii (strain ATCC BAA-1116)).